Reading from the N-terminus, the 420-residue chain is Na(+)/H(+) antiporter NhaA (420 aa).

Transmembrane regions (helical) follow at residues 34-54, 69-89, 107-127, 141-161, 168-190, 194-213, 271-291, 301-321, 342-362, and 374-394; these read TTGG…ANLG, LTIE…IAGL, LVPI…YTLF, IPMA…GAGL, FLLT…FFST, IWWL…MQHF, WSAG…HVSG, PISL…ITLG, IIAV…MTDL, and AKAS…AMLH.

Belongs to the NhaA Na(+)/H(+) (TC 2.A.33) antiporter family.

The protein localises to the cell membrane. The enzyme catalyses Na(+)(in) + 2 H(+)(out) = Na(+)(out) + 2 H(+)(in). Its function is as follows. Na(+)/H(+) antiporter that extrudes sodium in exchange for external protons. The chain is Na(+)/H(+) antiporter NhaA from Cutibacterium acnes (strain DSM 16379 / KPA171202) (Propionibacterium acnes).